The primary structure comprises 147 residues: Ribosomal RNA large subunit methyltransferase H (147 aa).

S-adenosyl-L-methionine contacts are provided by residues leucine 64, glycine 96, and phenylalanine 115–phenylalanine 120.

It belongs to the RNA methyltransferase RlmH family. In terms of assembly, homodimer.

It is found in the cytoplasm. The catalysed reaction is pseudouridine(1915) in 23S rRNA + S-adenosyl-L-methionine = N(3)-methylpseudouridine(1915) in 23S rRNA + S-adenosyl-L-homocysteine + H(+). Its function is as follows. Specifically methylates the pseudouridine at position 1915 (m3Psi1915) in 23S rRNA. In Acholeplasma laidlawii (strain PG-8A), this protein is Ribosomal RNA large subunit methyltransferase H.